The chain runs to 307 residues: Protease HtpX homolog (307 aa).

Helical transmembrane passes span 10-30 (VITI…AYGL) and 40-60 (ISII…QWLV). Zn(2+) is bound at residue His-144. Residue Glu-145 is part of the active site. His-148 contacts Zn(2+). 2 consecutive transmembrane segments (helical) span residues 156–176 (LLLA…SMIF) and 187–207 (FFLV…MILG). Glu-213 is a binding site for Zn(2+).

This sequence belongs to the peptidase M48B family. Zn(2+) is required as a cofactor.

The protein localises to the cell membrane. This is Protease HtpX homolog from Picrophilus torridus (strain ATCC 700027 / DSM 9790 / JCM 10055 / NBRC 100828 / KAW 2/3).